The chain runs to 437 residues: Repulsive guidance molecule B (437 aa).

Positions 1 to 45 (MGLRAAPSSAAAAAAEVEQRRSPGLCPPPLELLLLLLFSLGLLHA) are cleaved as a signal peptide. N120 carries N-linked (GlcNAc...) asparagine glycosylation. Over residues 121-133 (CSKDGPTSSTNPE) the composition is skewed to polar residues. The disordered stretch occupies residues 121–153 (CSKDGPTSSTNPEVTHDPCNYHSHAGAREHRRG). 2 disulfide bridges follow: C139/C226 and C163/C312. An N-linked (GlcNAc...) asparagine glycan is attached at N383. Residue N413 is the site of GPI-anchor amidated asparagine attachment. Positions 414–437 (GTPRGGSDLSVSLGLTCLILIVFL) are cleaved as a propeptide — removed in mature form.

This sequence belongs to the repulsive guidance molecule (RGM) family. In terms of assembly, homooligomer. Interacts with DRGX. Interacts with BMP2 and BMP4. Interacts with the BMP type I receptors ACVR1, BMPR1A and BMPR1B and with the BMP type II receptor ACVR2B. The functional complex with its receptor NEO1/neogenin appears to be a heterotetramer with a 2:2 stoichiometry, RGM molecules acting as staples that bring two NEO1 receptors together without interacting themselves, this arrangement leads to activation of downstream signaling via RhoA. GPI-anchored. Post-translationally, autocatalytically cleaved at low pH; the two chains remain linked via two disulfide bonds.

The protein localises to the cell membrane. It is found in the membrane raft. In terms of biological role, member of the repulsive guidance molecule (RGM) family that contributes to the patterning of the developing nervous system. Acts as a bone morphogenetic protein (BMP) coreceptor that potentiates BMP signaling. Promotes neuronal adhesion. May inhibit neurite outgrowth. The sequence is that of Repulsive guidance molecule B from Homo sapiens (Human).